A 346-amino-acid chain; its full sequence is Rhomboid protein 1, mitochondrial (346 aa).

Residues 1 to 73 constitute a mitochondrion transit peptide; the sequence is MSGVSSVMLG…RFFSQTSILK (73 aa). Helical transmembrane passes span 109-129, 145-165, 203-223, 246-266, 275-295, and 308-328; these read SMTILGLSLMAGIYFGSPYLF, LVYALLGINVAVFGLWQLPKC, MLALWSFGTSLATMLGASNFF, LAIVGPSLGASGALFGVLGCF, ILLFVFPVPGGAWVAFLASVA, and FDYAAHLGGSMMGVLYGWYIS. The Nucleophile role is filled by Ser-256. The active site involves His-313.

It belongs to the peptidase S54 family.

It localises to the mitochondrion inner membrane. The catalysed reaction is Cleaves type-1 transmembrane domains using a catalytic dyad composed of serine and histidine that are contributed by different transmembrane domains.. Its function is as follows. Mitochondrial rhomboid serine protease processing the mitochondrial membrane fusion regulator MGM1, and the cytochrome c peroxidase (CCP1). Required for TIM11 stability, ATP synthase complex assembly, mitochondrial morphology, cytochrome c (CYC1) storage and mitochondrial genome maintenance. This chain is Rhomboid protein 1, mitochondrial (PCP1), found in Saccharomyces cerevisiae (strain ATCC 204508 / S288c) (Baker's yeast).